A 347-amino-acid polypeptide reads, in one-letter code: Melatonin receptor type 1B-B (347 aa).

Over 1 to 36 (MPENIAFLTNSTDLGHVGRALGSSARPAWAIAVLAS) the chain is Extracellular. N10 carries an N-linked (GlcNAc...) asparagine glycan. A helical membrane pass occupies residues 37-57 (VLIFTTVVDVLGNLLVIISVF). Residues 58 to 72 (RNRKLRNAGNVFVVS) lie on the Cytoplasmic side of the membrane. The helical transmembrane segment at 73–93 (LAFADLVVAFYPYPLVLYAIF) threads the bilayer. Residues 94-105 (HDGWSLGETQCK) are Extracellular-facing. A disulfide bridge connects residues C104 and C181. Residues 106–126 (ISGFLMGLSVIGSVFNITGIA) form a helical membrane-spanning segment. Residues 127 to 148 (INRYCYICHSFAYGRLYSFRNT) are Cytoplasmic-facing. A helical transmembrane segment spans residues 149–169 (LLLVALIWALTVLAILPNFFV). The Extracellular portion of the chain corresponds to 170–191 (GSLSYDPRVYSCTFTQTASSSY). Residues 192–212 (TVVVVVVHFLVPIAVVTFCYL) form a helical membrane-spanning segment. Over 213–244 (RIWVLVIQVRRKVKSEERSRVRPSDLRNFVTM) the chain is Cytoplasmic. A helical transmembrane segment spans residues 245 to 265 (FVVFVLFAICWAPLNLIGLVV). Residues 266–278 (AINPEVMAPRVPE) are Extracellular-facing. Residues 279–299 (WLFVVSYFMAYFNSCLNAIIY) form a helical membrane-spanning segment. Over 300–347 (GLLNRNFRKEYVRIMTAVWIPRRFVTETSRAATDGMRSKPSPAINNNE) the chain is Cytoplasmic.

It belongs to the G-protein coupled receptor 1 family.

It is found in the cell membrane. Functionally, high affinity receptor for melatonin. The activity of this receptor is mediated by pertussis toxin sensitive G proteins that inhibits adenylate cyclase activity. This is Melatonin receptor type 1B-B (mtnr1bb) from Danio rerio (Zebrafish).